We begin with the raw amino-acid sequence, 331 residues long: NmrA-like family domain-containing oxidoreductase himF (331 aa).

Residues 8–13 (GATGNQ), 34–38 (RNAES), 55–56 (DG), 76–78 (TNG), lysine 133, and 155–167 (WFFE…QMAA) contribute to the NADP(+) site.

It belongs to the NmrA-type oxidoreductase family.

Its pathway is secondary metabolite biosynthesis. Its function is as follows. NmrA-like family domain-containing oxidoreductase; part of the him gene cluster that mediates the biosynthesis of himeic acid A, a ubiquitin-activating enzyme (E1) inhibitor. First, himA, together with the trans-enoyl reductase himH, catalyzes the formation of apolyketide chain, which is then condensed with leucine by the NRPS activity of himA. Dieckmann cyclization and release from himA gives a tetramic acid intermediate as the product of himA PKS-NRPS. HimG then catalyzes alpha-oxidation of the tetramic acid ring, with a subsequent rearrangement to yield apyrone intermediate. Two terminal methyl groups of polyketide and amide side chains are oxidized to carboxylic acids by himC cytochrome P450 monooxygenase to form himeic acid A. Himeic acid A is further converted to himeic acid B and C during culture growth. No gene responsible for pyrone to pyridone conversion was found in the him gene cluster and himeic acid A is non-enzymatically converted to himeic acid C by the incorporation of an ammonium nitrogen atom in a pH5 buffer, and to himeic acid B at a conversion ratio of 50% during incubation in MeOH for 5 days. The chain is NmrA-like family domain-containing oxidoreductase himF from Aspergillus japonicus.